The chain runs to 153 residues: Interleukin-4 (153 aa).

The signal sequence occupies residues Met-1 to Gly-24. Disulfide bonds link Cys-27–Cys-151, Cys-48–Cys-89, and Cys-70–Cys-123. Residue Asn-62 is glycosylated (N-linked (GlcNAc...) asparagine).

It belongs to the IL-4/IL-13 family.

Its subcellular location is the secreted. Its function is as follows. Participates in at least several B-cell activation processes as well as of other cell types. It is a costimulator of DNA-synthesis. It induces the expression of class II MHC molecules on resting B-cells. It enhances both secretion and cell surface expression of IgE and IgG1. It also regulates the expression of the low affinity Fc receptor for IgE (CD23) on both lymphocytes and monocytes. Positively regulates IL31RA expression in macrophages. Stimulates autophagy in dendritic cells by interfering with mTORC1 signaling and through the induction of RUFY4. The protein is Interleukin-4 (IL4) of Macaca fascicularis (Crab-eating macaque).